A 283-amino-acid chain; its full sequence is Bifunctional protein FolD (283 aa).

Residues 165-167 (GAS) and S190 each bind NADP(+).

Belongs to the tetrahydrofolate dehydrogenase/cyclohydrolase family. Homodimer.

The catalysed reaction is (6R)-5,10-methylene-5,6,7,8-tetrahydrofolate + NADP(+) = (6R)-5,10-methenyltetrahydrofolate + NADPH. It catalyses the reaction (6R)-5,10-methenyltetrahydrofolate + H2O = (6R)-10-formyltetrahydrofolate + H(+). The protein operates within one-carbon metabolism; tetrahydrofolate interconversion. Functionally, catalyzes the oxidation of 5,10-methylenetetrahydrofolate to 5,10-methenyltetrahydrofolate and then the hydrolysis of 5,10-methenyltetrahydrofolate to 10-formyltetrahydrofolate. The protein is Bifunctional protein FolD of Cupriavidus taiwanensis (strain DSM 17343 / BCRC 17206 / CCUG 44338 / CIP 107171 / LMG 19424 / R1) (Ralstonia taiwanensis (strain LMG 19424)).